The sequence spans 1256 residues: Protein flightless-1 (1256 aa).

LRR repeat units lie at residues 4–28, 29–51, 52–74, 75–99, 100–122, 124–145, 147–169, 171–192, 218–241, 243–264, 265–287, 289–312, 313–335, 336–358, and 360–381; these read LPFV…MRQM, SRVQ…LGHL, QKLE…LTEL, SCLR…LFHL, EELT…LERA, NLIV…LFIH, TDLL…TRRL, NLKT…QLPS, LANL…VYNV, TLVR…VELW, QRLE…LCKL, KLRR…IGKL, GALE…LCRC, GALK…IHLL, and GLDQ…PSEA. A disordered region spans residues 405 to 476; that stretch reads AAVPPSMPSS…ESLKPKRWDE (72 aa). Positions 431-476 are enriched in basic and acidic residues; the sequence is PRSEGDQDAAKVLKGMKDVAKDKDNEAGAVPEDGKPESLKPKRWDE. Gelsolin-like repeat units lie at residues 512 to 589, 633 to 703, 749 to 822, and 1168 to 1242; these read IEEV…EQFL, EPVA…AEFW, VELP…MQIF, and EKCA…SRRF.

Belongs to the villin/gelsolin family. In terms of tissue distribution, found in ovaries, larval fat bodies, brain and adult thorax.

In terms of biological role, may play a key role in embryonic cellularization by interacting with both the cytoskeleton and other cellular components. Alternatively, it may play a structural role in indirect flight muscle. Vital for embryonic development. The sequence is that of Protein flightless-1 (fliI) from Drosophila melanogaster (Fruit fly).